A 148-amino-acid chain; its full sequence is Deoxyuridine 5'-triphosphate nucleotidohydrolase (148 aa).

Substrate is bound by residues 67–69 (RSG), Asn80, 84–86 (LID), and Met94.

Belongs to the dUTPase family. It depends on Mg(2+) as a cofactor.

It catalyses the reaction dUTP + H2O = dUMP + diphosphate + H(+). The protein operates within pyrimidine metabolism; dUMP biosynthesis; dUMP from dCTP (dUTP route): step 2/2. In terms of biological role, this enzyme is involved in nucleotide metabolism: it produces dUMP, the immediate precursor of thymidine nucleotides and it decreases the intracellular concentration of dUTP so that uracil cannot be incorporated into DNA. The chain is Deoxyuridine 5'-triphosphate nucleotidohydrolase from Francisella tularensis subsp. holarctica (strain FTNF002-00 / FTA).